A 347-amino-acid polypeptide reads, in one-letter code: Dihydroorotase (347 aa).

Zn(2+) is bound by residues His17 and His19. Residues 19 to 21 (HVR) and Asn45 each bind substrate. Residues Lys102, His139, and His177 each contribute to the Zn(2+) site. An N6-carboxylysine modification is found at Lys102. Substrate is bound at residue His139. Leu222 is a binding site for substrate. Zn(2+) is bound at residue Asp250. The active site involves Asp250. Substrate contacts are provided by His254 and Ala266.

The protein belongs to the metallo-dependent hydrolases superfamily. DHOase family. Class II DHOase subfamily. As to quaternary structure, homodimer. Requires Zn(2+) as cofactor.

The enzyme catalyses (S)-dihydroorotate + H2O = N-carbamoyl-L-aspartate + H(+). Its pathway is pyrimidine metabolism; UMP biosynthesis via de novo pathway; (S)-dihydroorotate from bicarbonate: step 3/3. Its function is as follows. Catalyzes the reversible cyclization of carbamoyl aspartate to dihydroorotate. This Acidovorax sp. (strain JS42) protein is Dihydroorotase.